The following is a 389-amino-acid chain: tRNA (guanine-N(7)-)-methyltransferase non-catalytic subunit TRM82 (389 aa).

WD repeat units lie at residues 44–86, 134–179, and 184–222; these read QNVP…HQLK, GHTS…KGFL, and QFVS…LITE.

The protein belongs to the WD repeat TRM82 family. In terms of assembly, forms a heterodimer with the catalytic subunit TRM8.

The protein localises to the nucleus. It participates in tRNA modification; N(7)-methylguanine-tRNA biosynthesis. In terms of biological role, required for the formation of N(7)-methylguanine at position 46 (m7G46) in tRNA. In the complex, it is required to stabilize and induce conformational changes of the catalytic subunit. The sequence is that of tRNA (guanine-N(7)-)-methyltransferase non-catalytic subunit TRM82 from Lodderomyces elongisporus (strain ATCC 11503 / CBS 2605 / JCM 1781 / NBRC 1676 / NRRL YB-4239) (Yeast).